The sequence spans 867 residues: KH domain-containing protein akap-1 (867 aa).

The helical transmembrane segment at 108 to 128 threads the bilayer; the sequence is HALLIALGGFSIAALFVWYIN. Disordered stretches follow at residues 145 to 458 and 481 to 523; these read SNGL…QKRV and HENA…GLTT. Residues 152 to 162 are compositionally biased toward polar residues; that stretch reads ATASDVQTENG. Composition is skewed to basic and acidic residues over residues 186–211, 218–239, 247–275, and 298–307; these read QQKD…DKKQ, TEKK…DHVA, SEHK…EIEV, and QFVKKEEPKL. Polar residues predominate over residues 336 to 345; the sequence is TKMNDATSPL. The span at 363–383 shows a compositional bias: basic and acidic residues; that stretch reads EMEKSFNEEEFRLNESSDIDR. Residues 397-408 are compositionally biased toward basic residues; sequence NKNRSSQKRKGG. Basic and acidic residues-rich tracts occupy residues 441-458 and 481-490; these read LTKE…QKRV and HENASYEKSD. The span at 494–507 shows a compositional bias: polar residues; sequence LDSQNSEASSQDSG. Positions 528–595 constitute a KH domain; sequence LPMYEFEIPN…DEINHCLQML (68 aa). One can recognise a Tudor domain in the interval 689-747; the sequence is PCQNGLLCAAPVGNAWFRAVTVQYFDETDEVFVKFVDYGGYSKMARQDLRQIRTDLMSL.

Its subcellular location is the membrane. This chain is KH domain-containing protein akap-1, found in Caenorhabditis elegans.